Consider the following 86-residue polypeptide: uncharacterized protein (86 aa).

4Fe-4S ferredoxin-type domains are found at residues 1–29 (MALL…IGDE) and 31–65 (YVID…PDPE). 8 residues coordinate [4Fe-4S] cluster: Cys-9, Cys-12, Cys-15, Cys-19, Cys-38, Cys-41, Cys-50, and Cys-54.

The cofactor is [4Fe-4S] cluster.

This is an uncharacterized protein from Haemophilus influenzae (strain ATCC 51907 / DSM 11121 / KW20 / Rd).